The sequence spans 312 residues: G-protein coupled receptor BILF1 (312 aa).

Over 1–40 the chain is Extracellular; that stretch reads MLSTMAPGSTVGTLVANMTSVNATEDACTKSYSAFLSGMT. Intrachain disulfides connect cysteine 28/cysteine 258 and cysteine 97/cysteine 174. Residues 41-61 traverse the membrane as a helical segment; it reads SLLLVLLILLTLAGILFIIFV. Residues 62 to 67 lie on the Cytoplasmic side of the membrane; that stretch reads RKLVHR. A helical membrane pass occupies residues 68 to 88; the sequence is MDVWLIALLIELLLWVLGKMI. The Extracellular portion of the chain corresponds to 89 to 95; that stretch reads QEFSSTG. The helical transmembrane segment at 96 to 116 threads the bilayer; the sequence is LCLLTQNMMFLGLMCSVWTHL. At 117 to 138 the chain is on the cytoplasmic side; it reads GMALEKTLALFSRTPKRTSHRN. Residues 139–159 traverse the membrane as a helical segment; it reads VCLYLMGVFCLVLLLIIILLI. Topologically, residues 160–192 are extracellular; it reads TMGPDANLNRGPNMCREGPTKGMHTAVQGLKAG. Residues 193–213 traverse the membrane as a helical segment; it reads CYLLAAVLIVLLTVIIIWKLL. The Cytoplasmic segment spans residues 214 to 228; the sequence is RTKFGRKPRLICNVT. Residues 229-249 form a helical membrane-spanning segment; that stretch reads FTGLICAFSWFMLSLPLLFLG. Over 250–269 the chain is Extracellular; that stretch reads EAGSLGFDCTESLVARYYPG. The helical transmembrane segment at 270-290 threads the bilayer; that stretch reads PAACLALLLIILYAWSFSHFM. Topologically, residues 291-312 are cytoplasmic; sequence DSLKNQVTVTARYFRRVPSQST.

It belongs to the Epstein-Barr virus BILF1 protein family. As to quaternary structure, interacts with host CXCR4 to form higher-order heterooligomers. Interacts with host Gi heterotrimer.

The protein localises to the host cell membrane. It is found in the host mitochondrion outer membrane. Constitutively active, ligand-independent G protein-coupled receptor that has immunoevasive and oncogenic activities. Couples with the host inhibitory G protein (Gi) in order to disrupt the host chemokine signaling. As a consequence of its constitutive activity, mediates host CXCR4 inhibition. Enhances degradation of host major histocompatibility complex class I antigens via lysosomes, thereby modulating the antigen presentation to cytotoxic T cells. Targets selectively HLA-A, HLA-Band HLA-E molecules. Targets also newly synthesized MHC-I/peptide complexes en route to the host cell surface. Inhibits the host EIF2AK2/PKR phosphorylation. Displays tranforming activity. Utilizes its C-terminal tail to trigger host MAVS UFMylation via PARK2, resulting in selective MAVS removal from mitochondrial membranes and routing to lysosomes to prevent viral activation of the NLRP3 inflammasome. In Homo sapiens (Human), this protein is G-protein coupled receptor BILF1.